A 380-amino-acid chain; its full sequence is 4-hydroxy-tetrahydrodipicolinate synthase, chloroplastic (380 aa).

Positions 1–44 are disordered; the sequence is MISPTNLLPARKITPVSNGGAATASPSSPSVAARPRRLPSGLQS. The transit peptide at 1–54 directs the protein to the chloroplast; the sequence is MISPTNLLPARKITPVSNGGAATASPSSPSVAARPRRLPSGLQSVTGRGKVSLA. Residues 21 to 33 show a composition bias toward low complexity; the sequence is AATASPSSPSVAA. Position 123 (Thr123) interacts with pyruvate. The active-site Proton donor/acceptor is the Tyr209. Lys237 serves as the catalytic Schiff-base intermediate with substrate. Ile276 contributes to the pyruvate binding site.

This sequence belongs to the DapA family. As to quaternary structure, tetramer of modified subunits derived from two genes in different combinations.

It is found in the plastid. Its subcellular location is the chloroplast. It carries out the reaction L-aspartate 4-semialdehyde + pyruvate = (2S,4S)-4-hydroxy-2,3,4,5-tetrahydrodipicolinate + H2O + H(+). It functions in the pathway amino-acid biosynthesis; L-lysine biosynthesis via DAP pathway; (S)-tetrahydrodipicolinate from L-aspartate: step 3/4. Sensitive to lysine inhibition. This inhibition increase in an allosteric manner with increasing concentration of the inhibitor. Functionally, catalyzes the condensation of (S)-aspartate-beta-semialdehyde [(S)-ASA] and pyruvate to 4-hydroxy-tetrahydrodipicolinate (HTPA). This is 4-hydroxy-tetrahydrodipicolinate synthase, chloroplastic from Zea mays (Maize).